A 324-amino-acid chain; its full sequence is Annexin A10 (324 aa).

Annexin repeat units follow at residues 17-88, 89-160, 171-243, and 247-318; these read FNPI…GLMY, PPPL…NLVQ, AMAA…AIVL, and DKPA…AICA.

The protein belongs to the annexin family.

The polypeptide is Annexin A10 (ANXA10) (Homo sapiens (Human)).